A 120-amino-acid chain; its full sequence is Galanin-like peptide (120 aa).

Residues 1–22 (MALTVPLIVLAVLLSLMESPAS) form the signal peptide. The propeptide occupies 85–120 (SLGETFAKPDSGVTFVGVPDVVPWKRIRPGTTRFQI).

Belongs to the galanin family.

It is found in the secreted. Its function is as follows. Hypothalamic neuropeptide which binds to the G-protein-coupled galanin receptors (GALR1, GALR2 and GALR3). Involved in a large number of putative physiological functions in CNS homeostatic processes, including the regulation of gonadotropin-releasing hormone secretion. This chain is Galanin-like peptide (GALP), found in Sus scrofa (Pig).